We begin with the raw amino-acid sequence, 331 residues long: Pseudouridylate synthase TRUB2, mitochondrial (331 aa).

Residue Asp-98 is the Nucleophile of the active site. Residues 309 to 331 are disordered; it reads STGQPWGLKDPSSTLELESCSGQ. Polar residues predominate over residues 319 to 331; it reads PSSTLELESCSGQ.

Belongs to the pseudouridine synthase TruB family. In terms of assembly, forms a regulatory protein-RNA complex, consisting of RCC1L, NGRN, RPUSD3, RPUSD4, TRUB2, FASTKD2 and 16S mt-rRNA.

The protein localises to the mitochondrion matrix. The enzyme catalyses a uridine in mRNA = a pseudouridine in mRNA. The catalysed reaction is uridine(55) in tRNA = pseudouridine(55) in tRNA. Minor enzyme contributing to the isomerization of uridine to pseudouridine (pseudouridylation) of specific mitochondrial mRNAs (mt-mRNAs) such as COXI and COXIII mt-mRNAs. As a component of a functional protein-RNA module, consisting of RCC1L, NGRN, RPUSD3, RPUSD4, TRUB2, FASTKD2 and 16S mitochondrial ribosomal RNA (16S mt-rRNA), controls 16S mt-rRNA abundance and is required for intra-mitochondrial translation. Also catalyzes pseudouridylation of some tRNAs, including synthesis of pseudouridine(55) from uracil-55, in the psi GC loop of a subset of tRNAs. This Mus musculus (Mouse) protein is Pseudouridylate synthase TRUB2, mitochondrial.